A 142-amino-acid chain; its full sequence is Large ribosomal subunit protein uL13 (142 aa).

Belongs to the universal ribosomal protein uL13 family. In terms of assembly, part of the 50S ribosomal subunit.

This protein is one of the early assembly proteins of the 50S ribosomal subunit, although it is not seen to bind rRNA by itself. It is important during the early stages of 50S assembly. The sequence is that of Large ribosomal subunit protein uL13 from Cupriavidus necator (strain ATCC 17699 / DSM 428 / KCTC 22496 / NCIMB 10442 / H16 / Stanier 337) (Ralstonia eutropha).